The sequence spans 65 residues: Light-harvesting protein B-800-850 alpha chain C (65 aa).

Residues Met1–Ser11 lie on the Cytoplasmic side of the membrane. Residues Pro12–Leu35 traverse the membrane as a helical segment. Residue His31 participates in a bacteriochlorophyll binding. Residues Glu36–Lys65 lie on the Periplasmic side of the membrane.

This sequence belongs to the antenna complex alpha subunit family. In terms of assembly, the core complex is formed by different alpha and beta chains, binding bacteriochlorophyll molecules, and arranged most probably in tetrameric structures disposed around the reaction center. The non-pigmented gamma chains may constitute additional components.

It localises to the cell inner membrane. Its function is as follows. Antenna complexes are light-harvesting systems, which transfer the excitation energy to the reaction centers. This chain is Light-harvesting protein B-800-850 alpha chain C (pucAC), found in Rhodopseudomonas palustris.